The primary structure comprises 202 residues: MADS-box transcription factor 33 (202 aa).

In terms of domain architecture, MADS-box spans 1–61 (MVRGKVQMRR…GKLHELATNG (61 aa)). A K-box domain is found at 87–177 (QQVAEQGIFL…QEKVKEQQKL (91 aa)).

As to expression, expressed in seedling roots.

The protein resides in the nucleus. Functionally, probable transcription factor. This is MADS-box transcription factor 33 (MADS33) from Oryza sativa subsp. japonica (Rice).